The following is a 540-amino-acid chain: RNA exonuclease 3 (540 aa).

The segment at 7–34 adopts a C3H1-type zinc-finger fold; it reads QFKHIVCPFLRTGRKCQSRNCFFSHDFQ. The Exonuclease domain occupies 382–529; it reads HCALDCELCY…EDAVSALQLV (148 aa).

Belongs to the REXO1/REXO3 family.

It is found in the cytoplasm. The protein localises to the nucleus. In terms of biological role, 3' to 5' exoribonuclease required for proper 3' end maturation of MRP RNA and of the U5L snRNA. The polypeptide is RNA exonuclease 3 (rex3) (Schizosaccharomyces pombe (strain 972 / ATCC 24843) (Fission yeast)).